A 746-amino-acid polypeptide reads, in one-letter code: Polyphosphate kinase (746 aa).

Polar residues predominate over residues 1–17; that stretch reads MRQPNTQAEAQHTQPSV. Residues 1–60 are disordered; it reads MRQPNTQAEAQHTQPSVGSIAAHRPNTVAATVSGLEPDIDADLDAYEESEESQDGGARLP. Over residues 37-53 the composition is skewed to acidic residues; sequence PDIDADLDAYEESEESQ. Asn102 contacts ATP. 2 residues coordinate Mg(2+): Arg429 and Arg459. His489 (phosphohistidine intermediate) is an active-site residue. Residues Tyr522, Arg618, and His646 each contribute to the ATP site.

It belongs to the polyphosphate kinase 1 (PPK1) family. Mg(2+) serves as cofactor. In terms of processing, an intermediate of this reaction is the autophosphorylated ppk in which a phosphate is covalently linked to a histidine residue through a N-P bond.

It carries out the reaction [phosphate](n) + ATP = [phosphate](n+1) + ADP. Its function is as follows. Catalyzes the reversible transfer of the terminal phosphate of ATP to form a long-chain polyphosphate (polyP). This chain is Polyphosphate kinase, found in Streptomyces coelicolor (strain ATCC BAA-471 / A3(2) / M145).